The primary structure comprises 458 residues: tRNA-2-methylthio-N(6)-dimethylallyladenosine synthase (458 aa).

In terms of domain architecture, MTTase N-terminal spans 3 to 120; that stretch reads QKLYIETFGC…LPSMLEQVRC (118 aa). [4Fe-4S] cluster-binding residues include C12, C49, C83, C157, C161, and C164. Residues 143-375 form the Radical SAM core domain; that stretch reads RADGPKAFVS…QAKIADNAAK (233 aa). Residues 378 to 441 enclose the TRAM domain; it reads ASMVGSIQSV…PNSLRGRLIG (64 aa).

Belongs to the methylthiotransferase family. MiaB subfamily. Monomer. The cofactor is [4Fe-4S] cluster.

It is found in the cytoplasm. It catalyses the reaction N(6)-dimethylallyladenosine(37) in tRNA + (sulfur carrier)-SH + AH2 + 2 S-adenosyl-L-methionine = 2-methylsulfanyl-N(6)-dimethylallyladenosine(37) in tRNA + (sulfur carrier)-H + 5'-deoxyadenosine + L-methionine + A + S-adenosyl-L-homocysteine + 2 H(+). Catalyzes the methylthiolation of N6-(dimethylallyl)adenosine (i(6)A), leading to the formation of 2-methylthio-N6-(dimethylallyl)adenosine (ms(2)i(6)A) at position 37 in tRNAs that read codons beginning with uridine. The chain is tRNA-2-methylthio-N(6)-dimethylallyladenosine synthase from Methylococcus capsulatus (strain ATCC 33009 / NCIMB 11132 / Bath).